The following is a 69-amino-acid chain: Trypsin/subtilisin inhibitor (69 aa).

C4 and C49 form a disulfide bridge.

It belongs to the protease inhibitor I13 (potato type I serine protease inhibitor) family.

Inhibitor of trypsin, chymotrypsin, subtilisin, etc. This is Trypsin/subtilisin inhibitor from Amaranthus caudatus (Love-lies-bleeding).